We begin with the raw amino-acid sequence, 390 residues long: Probable L-tyrosine/L-aspartate decarboxylase (390 aa).

Lys239 carries the post-translational modification N6-(pyridoxal phosphate)lysine.

The protein belongs to the group II decarboxylase family. MfnA subfamily. The cofactor is pyridoxal 5'-phosphate.

It carries out the reaction L-tyrosine + H(+) = tyramine + CO2. The catalysed reaction is L-aspartate + H(+) = beta-alanine + CO2. It participates in cofactor biosynthesis; methanofuran biosynthesis. Its pathway is cofactor biosynthesis; coenzyme A biosynthesis. Functionally, catalyzes the decarboxylation of L-tyrosine to produce tyramine for methanofuran biosynthesis. Can also catalyze the decarboxylation of L-aspartate to produce beta-alanine for coenzyme A (CoA) biosynthesis. This is Probable L-tyrosine/L-aspartate decarboxylase from Methanococcus aeolicus (strain ATCC BAA-1280 / DSM 17508 / OCM 812 / Nankai-3).